Reading from the N-terminus, the 366-residue chain is Beta sliding clamp (366 aa).

Residues 1–125 (MKFTVEREHL…FPNLDDWQSE (125 aa)) are i. Residues 126–253 (VEFTLPQATM…YRRVLPKNPD (128 aa)) are II. An III region spans residues 254-366 (KHLEAGCDLL…AAYVVMPMRL (113 aa)).

The protein belongs to the beta sliding clamp family. Forms a ring-shaped head-to-tail homodimer around DNA which binds and tethers DNA polymerases and other proteins to the DNA. The DNA replisome complex has a single clamp-loading complex (3 tau and 1 each of delta, delta', psi and chi subunits) which binds 3 Pol III cores (1 core on the leading strand and 2 on the lagging strand) each with a beta sliding clamp dimer. Additional proteins in the replisome are other copies of gamma, psi and chi, Ssb, DNA helicase and RNA primase.

The protein localises to the cytoplasm. Confers DNA tethering and processivity to DNA polymerases and other proteins. Acts as a clamp, forming a ring around DNA (a reaction catalyzed by the clamp-loading complex) which diffuses in an ATP-independent manner freely and bidirectionally along dsDNA. Initially characterized for its ability to contact the catalytic subunit of DNA polymerase III (Pol III), a complex, multichain enzyme responsible for most of the replicative synthesis in bacteria; Pol III exhibits 3'-5' exonuclease proofreading activity. The beta chain is required for initiation of replication as well as for processivity of DNA replication. The chain is Beta sliding clamp (dnaN) from Escherichia coli O157:H7.